The chain runs to 424 residues: Tyrosine--tRNA ligase (424 aa).

Residue Y37 coordinates L-tyrosine. A 'HIGH' region motif is present at residues 42–51 (PTADSLHLGH). K144 carries the N6-acetyllysine modification. L-tyrosine is bound by residues Y175 and Q179. The 'KMSKS' region motif lies at 235–239 (KFGKT). K238 contacts ATP. The region spanning 357–414 (ADLMQALVDSELQPSRGQARKTIASNAITINGEKQSDPEYFFKEEDRLFGRFTLLRRG) is the S4 RNA-binding domain.

This sequence belongs to the class-I aminoacyl-tRNA synthetase family. TyrS type 1 subfamily. As to quaternary structure, homodimer.

Its subcellular location is the cytoplasm. It carries out the reaction tRNA(Tyr) + L-tyrosine + ATP = L-tyrosyl-tRNA(Tyr) + AMP + diphosphate + H(+). Catalyzes the attachment of tyrosine to tRNA(Tyr) in a two-step reaction: tyrosine is first activated by ATP to form Tyr-AMP and then transferred to the acceptor end of tRNA(Tyr). This Shigella flexneri serotype 5b (strain 8401) protein is Tyrosine--tRNA ligase.